Reading from the N-terminus, the 353-residue chain is Serine proteinase inhibitor 1 (353 aa).

It belongs to the serpin family. Poxviruses subfamily.

The protein localises to the host cytoplasm. Plays a role in mediating viral host range. May act to inhibit a caspase independent form of apoptosis to allow efficient virus replication in infected cells. This is Serine proteinase inhibitor 1 (OPG208) from Vaccinia virus (strain Western Reserve) (VACV).